The following is a 312-amino-acid chain: MPRPSEPSPYVEFDRSQWRSLRMSTPLKLSEDELVRLRGMGEKLDLLEVEEVYLPLARLIHLQVAARQRLFATTAEFLGEPQQNPDRPVPFIIGVAGSVAVGKSTTARVLQALLARWEHHPRVDLVTTDGFLYPNAELARRNLMHRKGFPESYNRRALMRFVTAVKSGADEAAAPVYSHLLYDIVPGEYQIVRHPDILILEGLNVLQTGPALMVSDLFDFSVYVDARIEDIEQWYISRFLTMRSTAFADPASHFHSYSTLTDEQAVFAARDIWHSINRPNLIENILPTRPRATLVLRKDADHSINRLRLRKL.

97–104 (GSVAVGKS) is a binding site for ATP.

This sequence belongs to the prokaryotic pantothenate kinase family.

It localises to the cytoplasm. The catalysed reaction is (R)-pantothenate + ATP = (R)-4'-phosphopantothenate + ADP + H(+). It functions in the pathway cofactor biosynthesis; coenzyme A biosynthesis; CoA from (R)-pantothenate: step 1/5. The polypeptide is Pantothenate kinase (Mycolicibacterium smegmatis (strain ATCC 700084 / mc(2)155) (Mycobacterium smegmatis)).